The following is a 329-amino-acid chain: DNA-directed RNA polymerase subunit alpha (329 aa).

Residues 1-232 (MQEMLEQLLT…YQLIAFVDLK (232 aa)) form an alpha N-terminal domain (alpha-NTD) region. The tract at residues 246–329 (FDPIFLQPVD…PSSLVSKESA (84 aa)) is alpha C-terminal domain (alpha-CTD).

The protein belongs to the RNA polymerase alpha chain family. In terms of assembly, homodimer. The RNAP catalytic core consists of 2 alpha, 1 beta, 1 beta' and 1 omega subunit. When a sigma factor is associated with the core the holoenzyme is formed, which can initiate transcription.

It carries out the reaction RNA(n) + a ribonucleoside 5'-triphosphate = RNA(n+1) + diphosphate. Functionally, DNA-dependent RNA polymerase catalyzes the transcription of DNA into RNA using the four ribonucleoside triphosphates as substrates. This is DNA-directed RNA polymerase subunit alpha from Hydrogenovibrio crunogenus (strain DSM 25203 / XCL-2) (Thiomicrospira crunogena).